Reading from the N-terminus, the 198-residue chain is MEAFHTHTGIGVPLRRSNVDTDQIIPAVYLKRVTRTGFEDGLFASWRSDPSFVLNLSPFDRGSVLVAGPDFGTGSSREHAVWALMDYGFRVVISSRFGDIFRGNAGKAGLLAAEVSQDGVELLWKLIEQSPGLEITANLQDRNITAGTTVLPFKIDDHTAWRLLEGLDDIALTLRKLDRIESYEATYPDWKPRTSPVA.

Belongs to the LeuD family. LeuD type 1 subfamily. As to quaternary structure, heterodimer of LeuC and LeuD.

It catalyses the reaction (2R,3S)-3-isopropylmalate = (2S)-2-isopropylmalate. It functions in the pathway amino-acid biosynthesis; L-leucine biosynthesis; L-leucine from 3-methyl-2-oxobutanoate: step 2/4. Functionally, catalyzes the isomerization between 2-isopropylmalate and 3-isopropylmalate, via the formation of 2-isopropylmaleate. This Mycolicibacterium paratuberculosis (strain ATCC BAA-968 / K-10) (Mycobacterium paratuberculosis) protein is 3-isopropylmalate dehydratase small subunit.